Reading from the N-terminus, the 732-residue chain is uncharacterized protein (732 aa).

2 disordered regions span residues 38–90 (TTLA…NNNK) and 226–629 (EESP…MDYQ). A compositionally biased stretch (low complexity) spans 47–56 (QQQQQQQQQQ). Over residues 57 to 76 (PPSSSTTKEGGATTTQDNKL) the composition is skewed to polar residues. Low complexity-rich tracts occupy residues 77 to 89 (TANG…NNNN), 231 to 247 (TTTT…TTAA), and 254 to 318 (TTTT…GTNS). Positions 327-338 (KAKKGVPKKAPT) are enriched in basic residues. 3 stretches are compositionally biased toward low complexity: residues 339–383 (KKQP…APKT), 401–421 (KTSK…STTK), and 487–523 (SAST…IKSK). Residues 553–566 (AAAEEQEEEEEEDN) are compositionally biased toward acidic residues. Low complexity-rich tracts occupy residues 567-577 (SNGIQNNNSSN) and 593-609 (DNFS…NGLL). Over residues 610–621 (SEDDDDDDDDDN) the composition is skewed to acidic residues.

This is an uncharacterized protein from Dictyostelium discoideum (Social amoeba).